Reading from the N-terminus, the 229-residue chain is MAKKSKQYQDAAKLVDRDKAYDVTEAVDLVKKMDFAKFDATVEVAFKLNVDTKQADQQLRGAVVLPNGTGKDQTVIVFAKGDKAKEAEEAGADFVGETDLVQKIQDGWLDFDVAIATPDMMAQVGRLGRVLGPKGLMPNPKTGTVTMDVAKAVNDSKAGKVTYRTDRDGNVHVPVGKVSFDTDKLVGNFKTIEDTIVKARPASVRGTFIQNLVVTSTFTPAVRVDLASF.

This sequence belongs to the universal ribosomal protein uL1 family. As to quaternary structure, part of the 50S ribosomal subunit.

In terms of biological role, binds directly to 23S rRNA. The L1 stalk is quite mobile in the ribosome, and is involved in E site tRNA release. Its function is as follows. Protein L1 is also a translational repressor protein, it controls the translation of the L11 operon by binding to its mRNA. The polypeptide is Large ribosomal subunit protein uL1 (Lactiplantibacillus plantarum (strain ATCC BAA-793 / NCIMB 8826 / WCFS1) (Lactobacillus plantarum)).